The chain runs to 290 residues: Eukaryotic translation initiation factor 3 subunit G (290 aa).

Residues 1-12 show a composition bias toward basic and acidic residues; the sequence is MADSKQSNRDWA. Disordered stretches follow at residues 1–30 and 173–192; these read MADSKQSNRDWAADDVDADELPPTTESTDA and AGETGGKYVPPSQRAGATGA. Positions 204–285 constitute an RRM domain; it reads PTLRVTSLSI…LILEVAWSQP (82 aa).

This sequence belongs to the eIF-3 subunit G family. Component of the eukaryotic translation initiation factor 3 (eIF-3) complex.

The protein localises to the cytoplasm. RNA-binding component of the eukaryotic translation initiation factor 3 (eIF-3) complex, which is involved in protein synthesis of a specialized repertoire of mRNAs and, together with other initiation factors, stimulates binding of mRNA and methionyl-tRNAi to the 40S ribosome. The eIF-3 complex specifically targets and initiates translation of a subset of mRNAs involved in cell proliferation. This subunit can bind 18S rRNA. This Cryptococcus neoformans var. neoformans serotype D (strain B-3501A) (Filobasidiella neoformans) protein is Eukaryotic translation initiation factor 3 subunit G.